The following is a 402-amino-acid chain: Glutamate N-acetyltransferase (402 aa).

Thr146, Lys172, Thr185, Glu267, Asn397, and Thr402 together coordinate substrate. Catalysis depends on Thr185, which acts as the Nucleophile.

This sequence belongs to the ArgJ family. Heterotetramer of two alpha and two beta chains.

Its subcellular location is the cytoplasm. The catalysed reaction is N(2)-acetyl-L-ornithine + L-glutamate = N-acetyl-L-glutamate + L-ornithine. Its pathway is amino-acid biosynthesis; L-arginine biosynthesis; L-ornithine and N-acetyl-L-glutamate from L-glutamate and N(2)-acetyl-L-ornithine (cyclic): step 1/1. With respect to regulation, competitively inhibited by L-ornithine. Its function is as follows. Catalyzes the transfer of the acetyl group from N(2)-acetylornithine to glutamate, forming N-acetylglutamate and L-ornithine. The protein is Glutamate N-acetyltransferase of Methanocaldococcus jannaschii (strain ATCC 43067 / DSM 2661 / JAL-1 / JCM 10045 / NBRC 100440) (Methanococcus jannaschii).